A 209-amino-acid chain; its full sequence is ATP-dependent Clp protease proteolytic subunit 2 (209 aa).

The Nucleophile role is filled by Ser-106. The active site involves His-131.

Belongs to the peptidase S14 family. Fourteen ClpP subunits assemble into 2 heptameric rings which stack back to back to give a disk-like structure with a central cavity, resembling the structure of eukaryotic proteasomes.

It localises to the cytoplasm. It carries out the reaction Hydrolysis of proteins to small peptides in the presence of ATP and magnesium. alpha-casein is the usual test substrate. In the absence of ATP, only oligopeptides shorter than five residues are hydrolyzed (such as succinyl-Leu-Tyr-|-NHMec, and Leu-Tyr-Leu-|-Tyr-Trp, in which cleavage of the -Tyr-|-Leu- and -Tyr-|-Trp bonds also occurs).. In terms of biological role, cleaves peptides in various proteins in a process that requires ATP hydrolysis. Has a chymotrypsin-like activity. Plays a major role in the degradation of misfolded proteins. The chain is ATP-dependent Clp protease proteolytic subunit 2 from Rhizobium etli (strain ATCC 51251 / DSM 11541 / JCM 21823 / NBRC 15573 / CFN 42).